The primary structure comprises 245 residues: Probable phosphatase YcdX (245 aa).

Residues His7, His9, His15, His40, Glu73, His101, His131, Asp192, and His194 each coordinate Zn(2+).

This sequence belongs to the PHP family. As to quaternary structure, homotrimer. The cofactor is Zn(2+).

The chain is Probable phosphatase YcdX from Escherichia coli (strain K12 / MC4100 / BW2952).